Consider the following 266-residue polypeptide: Ras-like protein family member 12 (266 aa).

GTP contacts are provided by residues 27–34 (GRRGAGKS), 74–78 (DTADL), and 134–137 (NKLD).

It belongs to the small GTPase superfamily. Ras family.

The catalysed reaction is GTP + H2O = GDP + phosphate + H(+). The protein is Ras-like protein family member 12 (Rasl12) of Mus musculus (Mouse).